The chain runs to 146 residues: MKALIQRVSAASVRVDNQIVGQIEQGILAYIGLGPEDTLKSAQKMIDKILGYRIFDNDAGKLDKNVQQVAGGLLLVSQFTLMAKTDKGRRPDFGGAMPPAQASELFKQMIDYAKQQHDKVATGEFGANMLVQADNDGPLNFILEIS.

The short motif at 137 to 138 (GP) is the Gly-cisPro motif, important for rejection of L-amino acids element.

Belongs to the DTD family. As to quaternary structure, homodimer.

It is found in the cytoplasm. The enzyme catalyses glycyl-tRNA(Ala) + H2O = tRNA(Ala) + glycine + H(+). The catalysed reaction is a D-aminoacyl-tRNA + H2O = a tRNA + a D-alpha-amino acid + H(+). Functionally, an aminoacyl-tRNA editing enzyme that deacylates mischarged D-aminoacyl-tRNAs. Also deacylates mischarged glycyl-tRNA(Ala), protecting cells against glycine mischarging by AlaRS. Acts via tRNA-based rather than protein-based catalysis; rejects L-amino acids rather than detecting D-amino acids in the active site. By recycling D-aminoacyl-tRNA to D-amino acids and free tRNA molecules, this enzyme counteracts the toxicity associated with the formation of D-aminoacyl-tRNA entities in vivo and helps enforce protein L-homochirality. The sequence is that of D-aminoacyl-tRNA deacylase from Psychrobacter sp. (strain PRwf-1).